The chain runs to 405 residues: Tryptophan synthase beta chain (405 aa).

Residue Lys95 is modified to N6-(pyridoxal phosphate)lysine.

This sequence belongs to the TrpB family. In terms of assembly, tetramer of two alpha and two beta chains. Pyridoxal 5'-phosphate serves as cofactor.

The enzyme catalyses (1S,2R)-1-C-(indol-3-yl)glycerol 3-phosphate + L-serine = D-glyceraldehyde 3-phosphate + L-tryptophan + H2O. The protein operates within amino-acid biosynthesis; L-tryptophan biosynthesis; L-tryptophan from chorismate: step 5/5. The beta subunit is responsible for the synthesis of L-tryptophan from indole and L-serine. In Pseudomonas putida (strain GB-1), this protein is Tryptophan synthase beta chain.